The sequence spans 526 residues: Phosphoenolpyruvate carboxylase (526 aa).

It belongs to the PEPCase type 2 family. As to quaternary structure, homotetramer. It depends on Mg(2+) as a cofactor.

The enzyme catalyses oxaloacetate + phosphate = phosphoenolpyruvate + hydrogencarbonate. In terms of biological role, catalyzes the irreversible beta-carboxylation of phosphoenolpyruvate (PEP) to form oxaloacetate (OAA), a four-carbon dicarboxylic acid source for the tricarboxylic acid cycle. This Methanosarcina mazei (strain ATCC BAA-159 / DSM 3647 / Goe1 / Go1 / JCM 11833 / OCM 88) (Methanosarcina frisia) protein is Phosphoenolpyruvate carboxylase.